Consider the following 634-residue polypeptide: Probable potassium transport system protein Kup 2 (634 aa).

12 consecutive transmembrane segments (helical) span residues 15 to 35 (LTLG…LYAF), 55 to 75 (VLSL…VIFL), 101 to 121 (WVAV…DAII), 142 to 162 (GMSQ…LFMF), 173 to 193 (LFGP…LWHI), 208 to 228 (AVTF…AVFL), 252 to 272 (WLSF…ALAL), 303 to 323 (LVIL…TGAY), 351 to 371 (IYMP…VLGF), 381 to 401 (YGIA…LIAW), 408 to 428 (PVWT…FFGA), and 435 to 455 (EGGW…FTWL).

This sequence belongs to the HAK/KUP transporter (TC 2.A.72) family.

Its subcellular location is the cell inner membrane. The catalysed reaction is K(+)(in) + H(+)(in) = K(+)(out) + H(+)(out). Functionally, transport of potassium into the cell. Likely operates as a K(+):H(+) symporter. The sequence is that of Probable potassium transport system protein Kup 2 from Novosphingobium aromaticivorans (strain ATCC 700278 / DSM 12444 / CCUG 56034 / CIP 105152 / NBRC 16084 / F199).